The sequence spans 251 residues: uncharacterized protein (251 aa).

The first 19 residues, 1 to 19, serve as a signal peptide directing secretion; the sequence is MRYLKRITIYISLLILVSG. Cys-20 is lipidated: N-palmitoyl cysteine. Cys-20 carries the S-diacylglycerol cysteine lipid modification.

Belongs to the staphylococcal tandem lipoprotein family.

It is found in the cell membrane. This is an uncharacterized protein from Staphylococcus epidermidis (strain ATCC 12228 / FDA PCI 1200).